A 97-amino-acid chain; its full sequence is Cell division protein FtsL (97 aa).

Topologically, residues 1-11 are cytoplasmic; sequence MSRLFVKRLPT. Residues 12–32 form a helical membrane-spanning segment; that stretch reads GSFLMLLLYIGLLLSAIAVAY. The Periplasmic portion of the chain corresponds to 33 to 97; the sequence is STYWNRQLLN…DPAEVRMVAP (65 aa).

It belongs to the FtsL family. As to quaternary structure, part of a complex composed of FtsB, FtsL and FtsQ.

The protein localises to the cell inner membrane. Its function is as follows. Essential cell division protein. May link together the upstream cell division proteins, which are predominantly cytoplasmic, with the downstream cell division proteins, which are predominantly periplasmic. In Pseudomonas aeruginosa (strain ATCC 15692 / DSM 22644 / CIP 104116 / JCM 14847 / LMG 12228 / 1C / PRS 101 / PAO1), this protein is Cell division protein FtsL.